The primary structure comprises 955 residues: UPF0182 protein tll1193 (955 aa).

9 helical membrane passes run 6–26, 53–73, 98–118, 163–183, 186–206, 240–260, 280–300, 324–344, and 354–374; these read VVPL…AIAL, WSVQ…FYGC, GLGL…LIVA, WLLG…VGLF, LGIL…PVVL, LWLV…YLLA, LQGL…LERY, LYGW…WSAI, and GPIA…ILIV.

The protein belongs to the UPF0182 family.

It localises to the cell membrane. The sequence is that of UPF0182 protein tll1193 from Thermosynechococcus vestitus (strain NIES-2133 / IAM M-273 / BP-1).